The primary structure comprises 695 residues: G-protein coupled receptor-associated protein LMBRD2 (695 aa).

The Extracellular portion of the chain corresponds to 1-5; sequence MSGAA. A helical membrane pass occupies residues 6–21; the sequence is LGLEIVFVFFLALFLL. Topologically, residues 22–32 are cytoplasmic; the sequence is HRYGDFKKQHR. A helical transmembrane segment spans residues 33–53; the sequence is LVIIGTLLAWYLCFLIVFILP. Over 54–105 the chain is Extracellular; it reads LDVSTTIYNRCKHAAANSSPPENSNITGLYATANPVPSQHPCFKPWSYIPDG. Asn78 carries N-linked (GlcNAc...) asparagine glycosylation. A helical membrane pass occupies residues 106-126; it reads IMPIFWRVVYWTSQFLTWILL. Residues 127 to 150 lie on the Cytoplasmic side of the membrane; sequence PFMQSYARSGGFSITGKIKTALIE. A helical membrane pass occupies residues 151-171; the sequence is NAIYYGTYLLIFGAFLIYVAV. Residues 172–186 are Extracellular-facing; that stretch reads NPHLHLEWNQLQTIG. A helical membrane pass occupies residues 187 to 207; sequence IAAANTWGLFLLVLLLGYGLV. The Cytoplasmic portion of the chain corresponds to 208–387; it reads EIPRSYWNGA…ECLLRPWFYK (180 aa). The stretch at 227 to 262 forms a coiled coil; it reads YFKAAKLMTEKADAEENLEDAMEEVRKVNESIKYNH. Residues 388 to 408 form a helical membrane-spanning segment; the sequence is ILAVVLSIFSVIVVWSECTFF. The Extracellular portion of the chain corresponds to 409 to 432; sequence STTPVLSLFAVFIQLAEKTYNYIY. The helical transmembrane segment at 433-453 threads the bilayer; sequence IEIACFLSIFFLSICVYSTVF. Residues 454-473 lie on the Cytoplasmic side of the membrane; it reads RIRVFNYYYLASHHQTDAYS. A helical transmembrane segment spans residues 474–494; the sequence is LLFSGMLFCRLTPPLCLNFLG. At 495-521 the chain is on the extracellular side; the sequence is LTHMDSSISHKNTQPTAYTSIMGSMKV. A helical transmembrane segment spans residues 522–542; the sequence is LSFIADGFYIYYPMLVVILCI. Over 543–695 the chain is Cytoplasmic; sequence ATYFSLGTRC…MSRSDIFNDV (153 aa). Positions 571-603 form a coiled coil; the sequence is LVNEGKELIRKEKRKRQRQEEGENRRREWKERY. Residues 581 to 628 are disordered; that stretch reads KEKRKRQRQEEGENRRREWKERYGHNREDSTRNRNIHTDPKESNFSDV. Positions 588–624 are enriched in basic and acidic residues; that stretch reads RQEEGENRRREWKERYGHNREDSTRNRNIHTDPKESN. A Phosphoserine modification is found at Ser633. The segment at 662–682 is disordered; it reads AETFTDDPLESESGRYQPGGR.

This sequence belongs to the LIMR family.

The protein localises to the cell membrane. In terms of biological role, recruited to ligand-activated beta-2 adrenergic receptor/ADRB2, it negatively regulates the adrenergic receptor signaling pathway. May also regulate other G-protein coupled receptors including type-1 angiotensin II receptor/AGTR1. In Homo sapiens (Human), this protein is G-protein coupled receptor-associated protein LMBRD2.